A 1313-amino-acid chain; its full sequence is Angiotensin-converting enzyme (1313 aa).

The signal sequence occupies residues 1-35 (MGAASGQRGRWPLSPPLLMLSLLLLLLLPPSPAPA). The Extracellular segment spans residues 36 to 1265 (LDPGLQPGNF…LEPQQARVGQ (1230 aa)). Residues asparagine 44, asparagine 60, asparagine 80, asparagine 117, asparagine 152, and asparagine 166 are each glycosylated (N-linked (GlcNAc...) asparagine). Peptidase M2 domains follow at residues 46–630 (SADE…LGWP) and 649–1228 (ETDE…LGWP). A disulfide bond links cysteine 163 and cysteine 171. Tyrosine 237 lines the chloride pocket. The N-linked (GlcNAc...) asparagine glycan is linked to asparagine 324. Cysteines 365 and 383 form a disulfide. Histidine 396 is a binding site for Zn(2+). The active-site Proton acceptor 1 is the glutamate 397. 2 residues coordinate Zn(2+): histidine 400 and glutamate 424. A glycan (N-linked (GlcNAc...) asparagine) is linked at asparagine 515. Histidine 526 (proton donor 1) is an active-site residue. Arginine 535 lines the chloride pocket. Cysteine 551 and cysteine 563 are joined by a disulfide. N-linked (GlcNAc...) asparagine glycans are attached at residues asparagine 683, asparagine 701, asparagine 720, and asparagine 766. An intrachain disulfide couples cysteine 763 to cysteine 769. The chloride site is built by arginine 797 and tyrosine 835. N-linked (GlcNAc...) asparagine glycosylation is present at asparagine 948. The cysteines at positions 963 and 981 are disulfide-linked. Histidine 994 lines the Zn(2+) pocket. Glutamate 995 acts as the Proton acceptor 2 in catalysis. Positions 998 and 1022 each coordinate Zn(2+). Positions 1096 and 1100 each coordinate chloride. Histidine 1124 acts as the Proton donor 2 in catalysis. Arginine 1133 provides a ligand contact to chloride. Cysteine 1149 and cysteine 1161 are disulfide-bonded. An N-linked (GlcNAc...) asparagine glycan is attached at asparagine 1197. The juxtamembrane stalk stretch occupies residues 1221–1262 (HGETLGWPEYTWTPNTARAEGSLPESSRVNFLGMYLEPQQAR). Residues 1266-1282 (WVLLFLGVALLVATVGL) form a helical membrane-spanning segment. Over 1283 to 1313 (AHRLYNIHNHHSLRRPHRGPQFGSEVELRHS) the chain is Cytoplasmic. A Phosphoserine modification is found at serine 1306.

It belongs to the peptidase M2 family. In terms of assembly, monomer and homodimer; homodimerizes following binding to an inhibitor. Interacts with calmodulin (CALM1, CALM2 or CALM3); interaction takes place in the cytoplasmic region and regulates phosphorylation and proteolytic cleavage. Zn(2+) is required as a cofactor. Chloride serves as cofactor. Produced following proteolytic cleavage by secretase enzymes that cleave the transmembrane form in the juxtamembrane stalk region upstream of the transmembrane region. Cleavage can take place at different sites of the juxtamembrane stalk region. Post-translationally, phosphorylated by CK2 on Ser-1306; which allows membrane retention. Phosphorylated on tyrosine residues on its extracellular part, promoting cleavage by secretase enzymes and formation of the soluble form (Angiotensin-converting enzyme, soluble form). Expressed in brain, kidney, lung, skeletal muscle and heart. In terms of tissue distribution, testis-specific isoform is expressed in spermatocytes, adult testis.

It is found in the cell membrane. The protein resides in the cytoplasm. It localises to the secreted. It carries out the reaction Release of a C-terminal dipeptide, oligopeptide-|-Xaa-Yaa, when Xaa is not Pro, and Yaa is neither Asp nor Glu. Thus, conversion of angiotensin I to angiotensin II, with increase in vasoconstrictor activity, but no action on angiotensin II.. It catalyses the reaction angiotensin I + H2O = L-histidyl-L-leucine + angiotensin II. The enzyme catalyses bradykinin + H2O = L-Phe-L-Arg + bradykinin(1-7). The catalysed reaction is substance P + H2O = substance P(1-9) + L-Leu-L-Met-NH2. It carries out the reaction substance P + H2O = substance P(1-8) + Gly-L-Leu-L-Met-NH2. It catalyses the reaction substance P + H2O = L-Phe-L-Phe-Gly-L-Leu-L-Met-NH2 + substance P(1-6). The enzyme catalyses neurotensin + H2O = neurotensin(1-11) + L-isoleucyl-L-leucine. The catalysed reaction is goralatide + H2O = N-acetyl-L-seryl-L-aspartate + L-lysyl-L-proline. It carries out the reaction Met-enkephalin + H2O = L-phenylalanyl-L-methionine + L-tyrosylglycylglycine. It catalyses the reaction Leu-enkephalin + H2O = L-tyrosylglycylglycine + L-phenylalanyl-L-leucine. The enzyme catalyses Met-enkephalin-Arg-Phe + H2O = L-arginyl-L-phenylalanine + Met-enkephalin. With respect to regulation, the dipeptidyl carboxypeptidase activity is strongly activated by chloride. The dipeptidyl carboxypeptidase activity is specifically inhibited by lisinopril, captopril and enalaprilat. Strongly inhibited by lisinopril and captopril. Dipeptidyl carboxypeptidase that removes dipeptides from the C-terminus of a variety of circulating hormones, such as angiotensin I, bradykinin or enkephalins, thereby playing a key role in the regulation of blood pressure, electrolyte homeostasis or synaptic plasticity. Composed of two similar catalytic domains, each possessing a functional active site, with different selectivity for substrates. Plays a major role in the angiotensin-renin system that regulates blood pressure and sodium retention by the kidney by converting angiotensin I to angiotensin II, resulting in an increase of the vasoconstrictor activity of angiotensin. Also able to inactivate bradykinin, a potent vasodilator, and therefore enhance the blood pressure response. Acts as a regulator of synaptic transmission by mediating cleavage of neuropeptide hormones, such as substance P, neurotensin or enkephalins. Catalyzes degradation of different enkephalin neuropeptides (Met-enkephalin, Leu-enkephalin, Met-enkephalin-Arg-Phe and possibly Met-enkephalin-Arg-Gly-Leu). Acts as a regulator of synaptic plasticity in the nucleus accumbens of the brain by mediating cleavage of Met-enkephalin-Arg-Phe, a strong ligand of Mu-type opioid receptor OPRM1, into Met-enkephalin. Met-enkephalin-Arg-Phe cleavage by ACE decreases activation of OPRM1, leading to long-term synaptic potentiation of glutamate release. Also acts as a regulator of hematopoietic stem cell differentiation by mediating degradation of hemoregulatory peptide N-acetyl-SDKP (AcSDKP). Acts as a regulator of cannabinoid signaling pathway by mediating degradation of hemopressin, an antagonist peptide of the cannabinoid receptor CNR1. Involved in amyloid-beta metabolism by catalyzing degradation of Amyloid-beta protein 40 and Amyloid-beta protein 42 peptides, thereby preventing plaque formation. Catalyzes cleavage of cholecystokinin (maturation of Cholecystokinin-8 and Cholecystokinin-5) and Gonadoliberin-1 (both maturation and degradation) hormones. Degradation of hemoregulatory peptide N-acetyl-SDKP (AcSDKP) and amyloid-beta proteins is mediated by the N-terminal catalytic domain, while angiotensin I and cholecystokinin cleavage is mediated by the C-terminal catalytic region. In terms of biological role, soluble form that is released in blood plasma and other body fluids following proteolytic cleavage in the juxtamembrane stalk region. Its function is as follows. Isoform produced by alternative promoter usage that is specifically expressed in spermatocytes and adult testis, and which is required for male fertility. In contrast to somatic isoforms, only contains one catalytic domain. Acts as a dipeptidyl carboxypeptidase that removes dipeptides from the C-terminus of substrates. The identity of substrates that are needed for male fertility is unknown. May also have a glycosidase activity which releases GPI-anchored proteins from the membrane by cleaving the mannose linkage in the GPI moiety. The GPIase activity was reported to be essential for the egg-binding ability of the sperm. This activity is however unclear and has been challenged by other groups, suggesting that it may be indirect. The polypeptide is Angiotensin-converting enzyme (Rattus norvegicus (Rat)).